We begin with the raw amino-acid sequence, 438 residues long: Coenzyme A disulfide reductase (438 aa).

FAD is bound at residue 8-33 (GAVAGGATCASQIRRLDKESDIIIFE). The substrate site is built by threonine 15, glutamine 19, arginine 22, serine 39, and asparagine 42. Cysteine 43 serves as the catalytic Nucleophile. Catalysis depends on cysteine 43, which acts as the Redox-active. Lysine 71 lines the substrate pocket. 151–166 (VLVVGAGYVSLEVLEN) is an NADP(+) binding site. 267 to 277 (TNVPNIYAIGD) lines the FAD pocket. Histidine 299 is a binding site for substrate. Tyrosine 419 is an FAD binding site. Lysine 427 is a binding site for substrate.

The protein belongs to the class-III pyridine nucleotide-disulfide oxidoreductase family. Homodimer. FAD is required as a cofactor.

The catalysed reaction is NADP(+) + 2 CoA = CoA-disulfide + NADPH + H(+). In terms of biological role, catalyzes specifically the NADPH-dependent reduction of coenzyme A disulfide. This Staphylococcus aureus (strain bovine RF122 / ET3-1) protein is Coenzyme A disulfide reductase.